Reading from the N-terminus, the 1341-residue chain is DNA-directed RNA polymerase subunit beta (1341 aa).

Belongs to the RNA polymerase beta chain family. As to quaternary structure, the RNAP catalytic core consists of 2 alpha, 1 beta, 1 beta' and 1 omega subunit. When a sigma factor is associated with the core the holoenzyme is formed, which can initiate transcription.

It catalyses the reaction RNA(n) + a ribonucleoside 5'-triphosphate = RNA(n+1) + diphosphate. In terms of biological role, DNA-dependent RNA polymerase catalyzes the transcription of DNA into RNA using the four ribonucleoside triphosphates as substrates. The sequence is that of DNA-directed RNA polymerase subunit beta from Vibrio cholerae serotype O1 (strain ATCC 39315 / El Tor Inaba N16961).